Consider the following 2495-residue polypeptide: Non-reducing polyketide synthase adrD (2495 aa).

The N-terminal acylcarrier protein transacylase domain (SAT) stretch occupies residues 14–252 (VVFGPQSSEI…HHSRHVTAVQ (239 aa)). Residues 386–807 (VIPIAITGMG…GSNAALVVKQ (422 aa)) enclose the Ketosynthase family 3 (KS3) domain. Catalysis depends on for beta-ketoacyl synthase activity residues Cys-551, His-686, and His-725. The interval 913 to 1222 (LCFGGQNGNE…QALDLGGALA (310 aa)) is malonyl-CoA:ACP transacylase (MAT) domain. Catalysis depends on Ser-1000, which acts as the For acyl/malonyl transferase activity. Residues 1294 to 1422 (KEFVQLLTKQ…GEISLHPFGQ (129 aa)) form an N-terminal hotdog fold region. Residues 1294-1601 (KEFVQLLTKQ…FTSVSIAGLS (308 aa)) form the PKS/mFAS DH domain. The segment at 1295 to 1600 (EFVQLLTKQP…TFTSVSIAGL (306 aa)) is product template (PT) domain. Catalysis depends on His-1325, which acts as the Proton acceptor; for dehydratase activity. Positions 1450 to 1601 (ESSGLKGFAV…FTSVSIAGLS (152 aa)) are C-terminal hotdog fold. Catalysis depends on Asp-1508, which acts as the Proton donor; for dehydratase activity. Positions 1651–1725 (SGHFMVVQEM…TLVQTIFPDA (75 aa)) constitute a Carrier domain. The residue at position 1685 (Ser-1685) is an O-(pantetheine 4'-phosphoryl)serine. A methyltransferase (CMeT) domain region spans residues 1887–2120 (QHTSEHNLLR…GFQWVDWTYN (234 aa)). A thioesterase (TE) domain region spans residues 2150–2495 (YLMNEETIVY…YEFLRDHVRY (346 aa)). Active-site for thioesterase activity residues include Ser-2273 and Asp-2432.

It carries out the reaction 3 malonyl-CoA + acetyl-CoA + 2 S-adenosyl-L-methionine = 3,5-dimethylorsellinate + 2 S-adenosyl-L-homocysteine + 3 CO2 + 4 CoA. The protein operates within secondary metabolite biosynthesis; terpenoid biosynthesis. Its function is as follows. Non-reducing polyketide synthase; part of the gene cluster that mediates the biosynthesis of andrastins, meroterpenoid compounds that exhibit inhibitory activity against ras farnesyltransferase, suggesting that they could be promising leads for antitumor agents. The first step of the pathway is the synthesis of 3,5-dimethylorsellinic acid (DMOA) by the polyketide synthase adrD via condensation of one acetyl-CoA starter unit with 3 malonyl-CoA units and 2 methylations. DMAO is then converted to farnesyl-DMAO by the prenyltransferase adrG. The methyltransferase adrK catalyzes the methylation of the carboxyl group of farnesyl-DMAO to farnesyl-DMAO methyl ester which is further converted to epoxyfarnesyl-DMAO methyl ester by the FAD-dependent monooxygenase adrH. The terpene cyclase adrI then catalyzes the carbon skeletal rearrangement to generate the andrastin E, the first compound in the pathway having the andrastin scaffold, with the tetracyclic ring system. The post-cyclization tailoring enzymes adrF, adrE, adrJ, and adrA, are involved in the conversion of andrastin E into andrastin A. The short chain dehydrogenase adrF is responsible for the oxidation of the C-3 a hydroxyl group of andrastin E to yield the corresponding ketone, andrastin D. The ketoreductase adrE stereoselectively reduces the carbonyl moiety to reverse the stereochemistry of the C-3 position to yield andrastin F. The acetyltransferase adrJ is the acetyltransferase that attaches the acetyl group to the C-3 hydroxyl group of andrastin F to yield andrastin C. Finally, the cytochrome P450 monooxygenase adrA catalyzes two sequential oxidation reactions of the C-23 methyl group, to generate the corresponding alcohol andrastin B, and aldehyde andrastin A. This chain is Non-reducing polyketide synthase adrD, found in Penicillium roqueforti.